Consider the following 492-residue polypeptide: Glutamyl-tRNA(Gln) amidotransferase subunit A (492 aa).

Residues Lys79 and Ser154 each act as charge relay system in the active site. Ser178 serves as the catalytic Acyl-ester intermediate.

It belongs to the amidase family. GatA subfamily. As to quaternary structure, heterotrimer of A, B and C subunits.

The catalysed reaction is L-glutamyl-tRNA(Gln) + L-glutamine + ATP + H2O = L-glutaminyl-tRNA(Gln) + L-glutamate + ADP + phosphate + H(+). Allows the formation of correctly charged Gln-tRNA(Gln) through the transamidation of misacylated Glu-tRNA(Gln) in organisms which lack glutaminyl-tRNA synthetase. The reaction takes place in the presence of glutamine and ATP through an activated gamma-phospho-Glu-tRNA(Gln). This Acinetobacter baylyi (strain ATCC 33305 / BD413 / ADP1) protein is Glutamyl-tRNA(Gln) amidotransferase subunit A.